Here is a 262-residue protein sequence, read N- to C-terminus: 2-aminoethylphosphonate dioxygenase (262 aa).

Lys108 contacts 2-oxoglutarate. The Fe cation site is built by His118, Asp120, and His198.

Belongs to the PhyH family. Fe(2+) serves as cofactor.

It carries out the reaction (2-aminoethyl)phosphonate + 2-oxoglutarate + O2 = (1R)-(2-amino-1-hydroxyethyl)phosphonate + succinate + CO2. With respect to regulation, activity is enhanced by ascorbate. Functionally, involved in the degradation of the organophosphonate 2-aminoethylphosphonic acid (2-AEP). Catalyzes the hydroxylation of 2-aminoethylphosphonic acid to yield (2-amino-1-hydroxyethyl)phosphonic acid. In Uncultured bacterium HF130_AEPn_1, this protein is 2-aminoethylphosphonate dioxygenase.